The sequence spans 400 residues: Phosphoglycerate kinase (400 aa).

Substrate contacts are provided by residues Asp-22 to Asn-24, Arg-38, His-61 to Arg-64, Arg-120, and Arg-153. Residues Lys-206, Gly-297, Glu-328, and Gly-354 to Thr-357 each bind ATP.

Belongs to the phosphoglycerate kinase family. As to quaternary structure, monomer.

Its subcellular location is the cytoplasm. The enzyme catalyses (2R)-3-phosphoglycerate + ATP = (2R)-3-phospho-glyceroyl phosphate + ADP. Its pathway is carbohydrate degradation; glycolysis; pyruvate from D-glyceraldehyde 3-phosphate: step 2/5. The protein is Phosphoglycerate kinase of Campylobacter curvus (strain 525.92).